Consider the following 199-residue polypeptide: FMN-dependent NADH:quinone oxidoreductase 2 (199 aa).

FMN contacts are provided by residues serine 10, 16–18 (SVS), and 96–99 (MYNF).

Belongs to the azoreductase type 1 family. As to quaternary structure, homodimer. The cofactor is FMN.

The enzyme catalyses 2 a quinone + NADH + H(+) = 2 a 1,4-benzosemiquinone + NAD(+). The catalysed reaction is N,N-dimethyl-1,4-phenylenediamine + anthranilate + 2 NAD(+) = 2-(4-dimethylaminophenyl)diazenylbenzoate + 2 NADH + 2 H(+). Quinone reductase that provides resistance to thiol-specific stress caused by electrophilic quinones. Its function is as follows. Also exhibits azoreductase activity. Catalyzes the reductive cleavage of the azo bond in aromatic azo compounds to the corresponding amines. This is FMN-dependent NADH:quinone oxidoreductase 2 from Pseudomonas putida (strain ATCC 47054 / DSM 6125 / CFBP 8728 / NCIMB 11950 / KT2440).